Reading from the N-terminus, the 129-residue chain is UPF0225 protein XOO0258 (129 aa).

It belongs to the UPF0225 family.

This is UPF0225 protein XOO0258 from Xanthomonas oryzae pv. oryzae (strain MAFF 311018).